Consider the following 608-residue polypeptide: Malonate--CoA ligase (608 aa).

This sequence belongs to the ATP-dependent AMP-binding enzyme family. Expressed in flowers.

It localises to the cytoplasm. The protein resides in the nucleus. The catalysed reaction is malonate + ATP + CoA = malonyl-CoA + AMP + diphosphate. Functionally, malonate--CoA ligase that catalyzes the formation of malonyl-CoA directly from malonate and CoA. May be required for the detoxification of malonate. The sequence is that of Malonate--CoA ligase (AAE13) from Arabidopsis thaliana (Mouse-ear cress).